Consider the following 69-residue polypeptide: Cytochrome c oxidase assembly factor 3, mitochondrial (69 aa).

The Mitochondrial matrix portion of the chain corresponds to 1-19 (MNQGNQAFENARKPFRRAN). Residues 20-42 (LITALGLGAFAFATFAYSVYRVH) form a helical membrane-spanning segment. At 43-69 (EDTFEDVVMTPELEKKIAEDRDLSKKN) the chain is on the mitochondrial intermembrane side.

Belongs to the COA3 family. As to quaternary structure, component of 250-400 kDa complexes called cytochrome oxidase assembly intermediates or COA complexes.

The protein resides in the mitochondrion inner membrane. In terms of biological role, required for assembly of cytochrome c oxidase (complex IV). This is Cytochrome c oxidase assembly factor 3, mitochondrial (coa3) from Schizosaccharomyces pombe (strain 972 / ATCC 24843) (Fission yeast).